The chain runs to 292 residues: tRNA (guanine-N(7)-)-methyltransferase (292 aa).

Residues 1 to 54 are disordered; that stretch reads MLKRDQSEMDIEAETANMGKEEKESFVHKRQKYRQEQEEKRLAAKKGVSFEQPE. The span at 19-42 shows a compositional bias: basic and acidic residues; that stretch reads GKEEKESFVHKRQKYRQEQEEKRL. S-adenosyl-L-methionine is bound by residues Gly110, 133–134, 168–169, and Cys188; these read EI and NA. The active site involves Asp191. 266–268 provides a ligand contact to S-adenosyl-L-methionine; that stretch reads TEE.

It belongs to the class I-like SAM-binding methyltransferase superfamily. TrmB family. In terms of assembly, forms a complex with TRM82.

It localises to the nucleus. It carries out the reaction guanosine(46) in tRNA + S-adenosyl-L-methionine = N(7)-methylguanosine(46) in tRNA + S-adenosyl-L-homocysteine. It functions in the pathway tRNA modification; N(7)-methylguanine-tRNA biosynthesis. Functionally, catalyzes the formation of N(7)-methylguanine at position 46 (m7G46) in tRNA. This chain is tRNA (guanine-N(7)-)-methyltransferase, found in Yarrowia lipolytica (strain CLIB 122 / E 150) (Yeast).